The chain runs to 561 residues: Protein NRT1/ PTR FAMILY 5.13 (561 aa).

The helical transmembrane segment at 78–98 (AWSGISTILPLLGAFVADAFL) threads the bilayer. A Phosphothreonine modification is found at threonine 103. 10 helical membrane passes run 104 to 124 (IIIASFIYVLGLAFLTLSAFL), 133 to 153 (SSPSSFLNALFFFSLYLVAIG), 183 to 203 (FFNWWYLSMCAGIGLAILVVV), 211 to 231 (WALGFGIPCVFMVISLVLFVL), 324 to 344 (IPVWLTTLAYAIPFAQYMTFF), 361 to 381 (IPPASLQVLISISIVLFVPIY), 405 to 425 (IGTGMVLATLTMVVAALVESK), 447 to 467 (IWWLFPQYMLLGLADVHTLVG), 486 to 506 (AIYLSAMGVGSLLSSLLIYLI), and 530 to 550 (YFYWLLAVVSAVGFFTFLFIS).

It belongs to the major facilitator superfamily. Proton-dependent oligopeptide transporter (POT/PTR) (TC 2.A.17) family. As to expression, expressed in roots, flowers and siliques. Detected in stems and leaves.

The protein localises to the membrane. This Arabidopsis thaliana (Mouse-ear cress) protein is Protein NRT1/ PTR FAMILY 5.13 (NPF5.13).